Consider the following 619-residue polypeptide: Schlafen family member 12-like (619 aa).

The chain crosses the membrane as a helical span at residues 598–618 (IFLFVCLFRFCLFVCLFVFFL).

This sequence belongs to the Schlafen family.

Its subcellular location is the membrane. The polypeptide is Schlafen family member 12-like (SLFN12L) (Pongo abelii (Sumatran orangutan)).